A 335-amino-acid polypeptide reads, in one-letter code: Mevalonate kinase (335 aa).

Residue 111 to 121 coordinates ATP; that stretch reads PVGAGLGSSAA. The active-site Proton acceptor is the D162.

It belongs to the GHMP kinase family. Mevalonate kinase subfamily. Homodimer. Requires Mg(2+) as cofactor.

The protein resides in the cytoplasm. It carries out the reaction (R)-mevalonate + ATP = (R)-5-phosphomevalonate + ADP + H(+). It functions in the pathway isoprenoid biosynthesis; isopentenyl diphosphate biosynthesis via mevalonate pathway; isopentenyl diphosphate from (R)-mevalonate: step 1/3. Functionally, catalyzes the phosphorylation of (R)-mevalonate (MVA) to (R)-mevalonate 5-phosphate (MVAP). Functions in the mevalonate (MVA) pathway leading to isopentenyl diphosphate (IPP), a key precursor for the biosynthesis of isoprenoid compounds such as archaeal membrane lipids. The protein is Mevalonate kinase of Pyrococcus horikoshii (strain ATCC 700860 / DSM 12428 / JCM 9974 / NBRC 100139 / OT-3).